The sequence spans 759 residues: LPS-assembly protein LptD (759 aa).

An N-terminal signal peptide occupies residues Met-1–Ala-45.

The protein belongs to the LptD family. In terms of assembly, component of the lipopolysaccharide transport and assembly complex. Interacts with LptE and LptA.

Its subcellular location is the cell outer membrane. Together with LptE, is involved in the assembly of lipopolysaccharide (LPS) at the surface of the outer membrane. The sequence is that of LPS-assembly protein LptD from Pseudoalteromonas atlantica (strain T6c / ATCC BAA-1087).